Here is a 418-residue protein sequence, read N- to C-terminus: MDSHNSAPPQIAEVRMDISSSTSVAAGNKVCRGAACDFSDSSNSSKDARERMASMRKLIIAVILCIIFMAVEVVGGIKANSLAILTDAAHLLSDVAAFAISLFSLWAAGWEATPQQSYGFFRIEILGALVSIQLIWLLAGILVYEAIVRLINESGEVQGSLMFAVSAFGLFVNIIMAVLLGHDHGHGHGHGHGHGHSHDHDHGGSDHDHHHHEDQEHGHVHHHEDGHGNSITVNLHHHPGTGHHHHDAEEPLLKSDAGCDSTQSGAKDAKKARRNINVHSAYLHVLGDSIQSIGVMIGGAIIWYKPEWKIIDLICTLIFSVIVLFTTIKMLRNILEVLMESTPREIDATSLENGLRDMDGVVAVHELHIWAITVGKVLLACHVTITQDADADQMLDKVIGYIKSEYNISHVTIQIERE.

Topologically, residues 1–56 are cytoplasmic; the sequence is MDSHNSAPPQIAEVRMDISSSTSVAAGNKVCRGAACDFSDSSNSSKDARERMASMR. A helical transmembrane segment spans residues 57 to 77; it reads KLIIAVILCIIFMAVEVVGGI. Over 78 to 89 the chain is Vacuolar; sequence KANSLAILTDAA. A helical membrane pass occupies residues 90–110; it reads HLLSDVAAFAISLFSLWAAGW. Topologically, residues 111 to 122 are cytoplasmic; sequence EATPQQSYGFFR. A helical transmembrane segment spans residues 123-143; sequence IEILGALVSIQLIWLLAGILV. Residues 144–160 lie on the Vacuolar side of the membrane; the sequence is YEAIVRLINESGEVQGS. A helical membrane pass occupies residues 161 to 181; that stretch reads LMFAVSAFGLFVNIIMAVLLG. The segment at 182–246 is required for zinc-binding; that stretch reads HDHGHGHGHG…HHPGTGHHHH (65 aa). The Cytoplasmic portion of the chain corresponds to 182–282; that stretch reads HDHGHGHGHG…RRNINVHSAY (101 aa). Residues 186-248 form a disordered region; it reads HGHGHGHGHG…PGTGHHHHDA (63 aa). Over residues 196–227 the composition is skewed to basic and acidic residues; it reads HSHDHDHGGSDHDHHHHEDQEHGHVHHHEDGH. The segment covering 235–245 has biased composition (basic residues); the sequence is LHHHPGTGHHH. A helical transmembrane segment spans residues 283-303; sequence LHVLGDSIQSIGVMIGGAIIW. The Vacuolar segment spans residues 304–307; that stretch reads YKPE. Residues 308-328 form a helical membrane-spanning segment; that stretch reads WKIIDLICTLIFSVIVLFTTI. The Cytoplasmic portion of the chain corresponds to 329–418; that stretch reads KMLRNILEVL…SHVTIQIERE (90 aa).

Belongs to the cation diffusion facilitator (CDF) transporter (TC 2.A.4) family. SLC30A subfamily.

It localises to the vacuole membrane. Functionally, involved in sequestration of excess zinc in the cytoplasm into vacuoles to maintain zinc homeostasis. The polypeptide is Metal tolerance protein 1 (MTP1) (Oryza sativa subsp. japonica (Rice)).